The primary structure comprises 402 residues: Argininosuccinate synthase (402 aa).

Residues Ala-11–Ser-19 and Ala-39 contribute to the ATP site. The L-citrulline site is built by Tyr-90 and Ser-95. Position 120 (Gly-120) interacts with ATP. L-aspartate-binding residues include Thr-122, Asn-126, and Asp-127. Residue Asn-126 coordinates L-citrulline. 5 residues coordinate L-citrulline: Arg-130, Ser-179, Ser-188, Glu-264, and Tyr-276.

It belongs to the argininosuccinate synthase family. Type 1 subfamily. In terms of assembly, homotetramer.

It is found in the cytoplasm. The catalysed reaction is L-citrulline + L-aspartate + ATP = 2-(N(omega)-L-arginino)succinate + AMP + diphosphate + H(+). It participates in amino-acid biosynthesis; L-arginine biosynthesis; L-arginine from L-ornithine and carbamoyl phosphate: step 2/3. The polypeptide is Argininosuccinate synthase (Roseiflexus castenholzii (strain DSM 13941 / HLO8)).